Here is a 225-residue protein sequence, read N- to C-terminus: Non-structural protein V (225 aa).

Polar residues predominate over residues 145 to 157 (SNEPVSSAGSAQD). The tract at residues 145 to 173 (SNEPVSSAGSAQDPNFKRGGANRERARGN) is disordered. The Zn(2+) site is built by His174, Cys193, Cys197, Cys209, Cys211, Cys214, Cys218, and Cys221.

It belongs to the paramyxoviruses V protein family. Interacts with host IFIH1/MDA5 and DHX58/LGP2. Forms with host DDB1, CUL4A, STAT1 and STAT2 the HPIV2 virus V-dependent complex (VDC); this complex targets host STAT2 to proteasomal degradation.

It localises to the host nucleus. Plays an essential role in the inhibition of host immune response. Prevents the establishment of cellular antiviral state by blocking interferon-alpha/beta (IFN-alpha/beta) production and signaling pathway. Interacts with host IFIH1/MDA5 and DHX58/LGP2 to inhibit the transduction pathway involved in the activation of IFN-beta promoter, thus protecting the virus against cell antiviral state. Efficiently blocks type I IFN signaling following infection by targeting host STAT2 for proteasomal degradation. Also plays a role in viral growth by promoting host RhoA-induced F-actin formation. This is Non-structural protein V (P/V) from Homo sapiens (Human).